The following is a 460-amino-acid chain: Jacalin-related lectin 36 (460 aa).

In terms of domain architecture, Jacalin-type lectin 1 spans 1-131 (MAAATMSWDD…LNSIDVHFAP (131 aa)). Ala-2 carries the post-translational modification N-acetylalanine. 3 disordered regions span residues 34–57 (YDGD…VSLS), 133–162 (PSSS…WDDG), and 291–334 (SGRG…PHEG). The span at 133-143 (PSSSSSSSSLS) shows a compositional bias: low complexity. The Jacalin-type lectin 2 domain maps to 145 to 289 (ANKVDAQGGK…LNALGAYFAP (145 aa)). Polar residues predominate over residues 292–309 (GRGTPSATQPPGSAQPTG). The 145-residue stretch at 313 to 457 (AKKLEAKGGN…IHQVGVHVKP (145 aa)) folds into the Jacalin-type lectin 3 domain.

Belongs to the jacalin lectin family.

This chain is Jacalin-related lectin 36 (JAL36), found in Arabidopsis thaliana (Mouse-ear cress).